A 194-amino-acid chain; its full sequence is NADH-quinone oxidoreductase subunit B (194 aa).

Residues Met1–Val11 are compositionally biased toward polar residues. Residues Met1–Ala22 are disordered. Residues Cys72, Cys73, Cys138, and Cys168 each coordinate [4Fe-4S] cluster.

Belongs to the complex I 20 kDa subunit family. As to quaternary structure, NDH-1 is composed of 14 different subunits. Subunits NuoB, C, D, E, F, and G constitute the peripheral sector of the complex. [4Fe-4S] cluster is required as a cofactor.

Its subcellular location is the cell inner membrane. The enzyme catalyses a quinone + NADH + 5 H(+)(in) = a quinol + NAD(+) + 4 H(+)(out). Functionally, NDH-1 shuttles electrons from NADH, via FMN and iron-sulfur (Fe-S) centers, to quinones in the respiratory chain. The immediate electron acceptor for the enzyme in this species is believed to be ubiquinone. Couples the redox reaction to proton translocation (for every two electrons transferred, four hydrogen ions are translocated across the cytoplasmic membrane), and thus conserves the redox energy in a proton gradient. In Agrobacterium fabrum (strain C58 / ATCC 33970) (Agrobacterium tumefaciens (strain C58)), this protein is NADH-quinone oxidoreductase subunit B.